The sequence spans 373 residues: 1-deoxy-D-xylulose 5-phosphate reductoisomerase (373 aa).

6 residues coordinate NADPH: Thr-10, Gly-11, Ser-12, Ile-13, Arg-37, and Asn-112. Residue Lys-113 participates in 1-deoxy-D-xylulose 5-phosphate binding. An NADPH-binding site is contributed by Glu-114. Residue Asp-134 participates in Mn(2+) binding. Positions 135, 136, 160, and 183 each coordinate 1-deoxy-D-xylulose 5-phosphate. Residue Glu-136 coordinates Mn(2+). Gly-189 serves as a coordination point for NADPH. Positions 196, 201, 202, and 205 each coordinate 1-deoxy-D-xylulose 5-phosphate. A Mn(2+)-binding site is contributed by Glu-205.

The protein belongs to the DXR family. Requires Mg(2+) as cofactor. It depends on Mn(2+) as a cofactor.

The enzyme catalyses 2-C-methyl-D-erythritol 4-phosphate + NADP(+) = 1-deoxy-D-xylulose 5-phosphate + NADPH + H(+). The protein operates within isoprenoid biosynthesis; isopentenyl diphosphate biosynthesis via DXP pathway; isopentenyl diphosphate from 1-deoxy-D-xylulose 5-phosphate: step 1/6. Its function is as follows. Catalyzes the NADPH-dependent rearrangement and reduction of 1-deoxy-D-xylulose-5-phosphate (DXP) to 2-C-methyl-D-erythritol 4-phosphate (MEP). The protein is 1-deoxy-D-xylulose 5-phosphate reductoisomerase of Persephonella marina (strain DSM 14350 / EX-H1).